The following is a 222-amino-acid chain: uncharacterized protein (222 aa).

Gly-2 carries N-myristoyl glycine; by host lipidation.

The protein belongs to the mimivirus R683/R861 family.

This is an uncharacterized protein from Acanthamoeba polyphaga mimivirus (APMV).